A 1079-amino-acid chain; its full sequence is Intraflagellar transport protein 80 (1079 aa).

Residues 495–514 form a disordered region; sequence GDMIRPSTVQNQPSTQGLPN. Residues 501-514 are compositionally biased toward polar residues; it reads STVQNQPSTQGLPN.

Its subcellular location is the cell projection. The protein resides in the cilium. It localises to the flagellum. The protein localises to the cytoplasm. It is found in the cytoskeleton. Its subcellular location is the flagellum axoneme. The protein resides in the flagellum basal body. Functionally, component of the intraflagellar transport complex B (IFT-B) involved in flagellar assembly. The polypeptide is Intraflagellar transport protein 80 (Giardia intestinalis (strain ATCC 50803 / WB clone C6) (Giardia lamblia)).